The sequence spans 228 residues: Odorant-binding protein 47 (228 aa).

6 cysteine pairs are disulfide-bonded: Cys60–Cys225, Cys73–Cys215, Cys74–Cys204, Cys88–Cys114, Cys110–Cys185, and Cys158–Cys195. The N-linked (GlcNAc...) asparagine glycan is linked to Asn117.

The protein belongs to the PBP/GOBP family. Glycosylated. As to expression, head without antennae (at protein level).

The protein resides in the secreted. Functionally, present in the aqueous fluid surrounding olfactory sensory dendrites and are thought to aid in the capture and transport of hydrophobic odorants into and through this fluid. Binds N-phenyl-1-naphthylamine, menthol, citronellal, 1-dodecanol, decanal, p-tert-butylbenzophenone, 4-hydroxy-4'-isopropylazobenzene, 2-pyrrolyl-p-methyl-azobenzene and indole. Expressed in mosquito head but barely detectable in antennae, which suggests that it may be present in mouth structures, such as palpi and proboscis, and may have a function in taste. The protein is Odorant-binding protein 47 of Anopheles gambiae (African malaria mosquito).